Here is a 205-residue protein sequence, read N- to C-terminus: Protein-L-isoaspartate O-methyltransferase (205 aa).

Serine 56 is an active-site residue.

Belongs to the methyltransferase superfamily. L-isoaspartyl/D-aspartyl protein methyltransferase family.

It is found in the cytoplasm. It carries out the reaction [protein]-L-isoaspartate + S-adenosyl-L-methionine = [protein]-L-isoaspartate alpha-methyl ester + S-adenosyl-L-homocysteine. Functionally, catalyzes the methyl esterification of L-isoaspartyl residues in peptides and proteins that result from spontaneous decomposition of normal L-aspartyl and L-asparaginyl residues. It plays a role in the repair and/or degradation of damaged proteins. This is Protein-L-isoaspartate O-methyltransferase from Aeromonas salmonicida (strain A449).